We begin with the raw amino-acid sequence, 540 residues long: Transcription termination/antitermination protein NusA (540 aa).

The S1 motif domain occupies 144–214 (GQVIEARVED…SMWPITLSRS (71 aa)). In terms of domain architecture, KH spans 319–386 (DTSIEIVVPA…QGIFGIKKRR (68 aa)). Residues 457-540 (VAAPTPTPAP…KQTFDNFDDL (84 aa)) are disordered. Over residues 461–489 (TPTPAPQPTPAPTKVEPVPPPVSVTPKPI) the composition is skewed to pro residues. A compositionally biased stretch (basic and acidic residues) spans 512 to 522 (DDSKTKPEKSS). Polar residues predominate over residues 523–540 (AKTNTPQTKQTFDNFDDL).

This sequence belongs to the NusA family. Monomer. Binds directly to the core enzyme of the DNA-dependent RNA polymerase and to nascent RNA.

Its subcellular location is the cytoplasm. Participates in both transcription termination and antitermination. The chain is Transcription termination/antitermination protein NusA from Mycoplasma pneumoniae (strain ATCC 29342 / M129 / Subtype 1) (Mycoplasmoides pneumoniae).